The primary structure comprises 417 residues: Putative UDP-arabinose 4-epimerase 2 (417 aa).

Residues 1–31 (MLNLGRARTGRQNRSMSFEGLDFADPKKNNN) are Cytoplasmic-facing. A helical; Signal-anchor for type II membrane protein membrane pass occupies residues 32 to 54 (YMGKIVLVMTLTAMCILLLNQSP). Over 55 to 417 (TFNTPSVFSR…YGSSSLVSAY (363 aa)) the chain is Lumenal. 71–102 (HVLVTGGAGYIGSHAALRLLKDSYRVTIVDNL) is an NAD(+) binding site. Tyrosine 219 acts as the Proton acceptor in catalysis.

It belongs to the NAD(P)-dependent epimerase/dehydratase family. It depends on NAD(+) as a cofactor.

It localises to the golgi apparatus. The protein resides in the golgi stack membrane. It carries out the reaction UDP-beta-L-arabinopyranose = UDP-alpha-D-xylose. It participates in nucleotide-sugar biosynthesis; UDP-L-arabinose biosynthesis; UDP-L-arabinose from UDP-alpha-D-xylose: step 1/1. The protein operates within cell wall biogenesis; cell wall polysaccharide biosynthesis. In Arabidopsis thaliana (Mouse-ear cress), this protein is Putative UDP-arabinose 4-epimerase 2.